The chain runs to 118 residues: Large ribosomal subunit protein bL20 (118 aa).

Belongs to the bacterial ribosomal protein bL20 family.

Its function is as follows. Binds directly to 23S ribosomal RNA and is necessary for the in vitro assembly process of the 50S ribosomal subunit. It is not involved in the protein synthesizing functions of that subunit. This chain is Large ribosomal subunit protein bL20, found in Agathobacter rectalis (strain ATCC 33656 / DSM 3377 / JCM 17463 / KCTC 5835 / VPI 0990) (Eubacterium rectale).